An 837-amino-acid polypeptide reads, in one-letter code: E3 ubiquitin-protein ligase bre-1 (837 aa).

The disordered stretch occupies residues 1 to 33; it reads MMKRSNEGIGGENYASSPSDDGQQKRRKIQFEP. Positions 1–313 are interaction with ubc-1; it reads MMKRSNEGIG…AKEIENLRLE (313 aa). Coiled coils occupy residues 54 to 89 and 185 to 253; these read TSKL…ESNF and HKEL…KHMR. Residues 269–302 are disordered; the sequence is GQSGGNGGATPSSSGTTNATEKKISAPDIPPSET. A compositionally biased stretch (polar residues) spans 277–287; sequence ATPSSSGTTNA. Coiled coils occupy residues 300–397, 458–651, and 677–763; these read SETA…AFRS, DEMK…KAQT, and VQFK…NESV. The segment at 785-824 adopts an RING-type zinc-finger fold; it reads CPSCKTRPKDCIMLKCYHLFCETCIKTMYDTRQRKCPKCN.

The protein belongs to the BRE1 family. Interacts with ubc-1. Interacts with mrg-1. As to expression, in adult animals, expressed in oocytes, germ cells, pharyngeal and intestinal cells.

It localises to the nucleus. It carries out the reaction S-ubiquitinyl-[E2 ubiquitin-conjugating enzyme]-L-cysteine + [acceptor protein]-L-lysine = [E2 ubiquitin-conjugating enzyme]-L-cysteine + N(6)-ubiquitinyl-[acceptor protein]-L-lysine.. It functions in the pathway protein modification; protein ubiquitination. Its function is as follows. E3 ubiquitin-protein ligase that mediates monoubiquitination of 'Lys-117' of histone H2B. H2B 'Lys-117' ubiquitination gives a specific tag for epigenetic transcriptional activation and is also prerequisite for histone H3 'Lys-4' and 'Lys-79' methylation. Involved in regulating stem cell proliferative fate. This chain is E3 ubiquitin-protein ligase bre-1 (rfp-1), found in Caenorhabditis elegans.